Here is a 348-residue protein sequence, read N- to C-terminus: Beta-hexosaminidase (348 aa).

Residues D64, R72, R138, and 168-169 (KH) contribute to the substrate site. H181 serves as the catalytic Proton donor/acceptor. Catalysis depends on D252, which acts as the Nucleophile.

It belongs to the glycosyl hydrolase 3 family. NagZ subfamily.

The protein resides in the cytoplasm. It carries out the reaction Hydrolysis of terminal non-reducing N-acetyl-D-hexosamine residues in N-acetyl-beta-D-hexosaminides.. It participates in cell wall biogenesis; peptidoglycan recycling. In terms of biological role, plays a role in peptidoglycan recycling by cleaving the terminal beta-1,4-linked N-acetylglucosamine (GlcNAc) from peptide-linked peptidoglycan fragments, giving rise to free GlcNAc, anhydro-N-acetylmuramic acid and anhydro-N-acetylmuramic acid-linked peptides. This chain is Beta-hexosaminidase, found in Alkalilimnicola ehrlichii (strain ATCC BAA-1101 / DSM 17681 / MLHE-1).